A 189-amino-acid chain; its full sequence is Xanthine phosphoribosyltransferase (189 aa).

Xanthine-binding residues include Leu20 and Asn27. 5-phospho-alpha-D-ribose 1-diphosphate is bound at residue 128–132 (ANGEA). Lys156 contributes to the xanthine binding site.

Belongs to the purine/pyrimidine phosphoribosyltransferase family. Xpt subfamily. In terms of assembly, homodimer.

It localises to the cytoplasm. The catalysed reaction is XMP + diphosphate = xanthine + 5-phospho-alpha-D-ribose 1-diphosphate. Its pathway is purine metabolism; XMP biosynthesis via salvage pathway; XMP from xanthine: step 1/1. In terms of biological role, converts the preformed base xanthine, a product of nucleic acid breakdown, to xanthosine 5'-monophosphate (XMP), so it can be reused for RNA or DNA synthesis. The protein is Xanthine phosphoribosyltransferase of Lactobacillus delbrueckii subsp. bulgaricus (strain ATCC 11842 / DSM 20081 / BCRC 10696 / JCM 1002 / NBRC 13953 / NCIMB 11778 / NCTC 12712 / WDCM 00102 / Lb 14).